The following is a 331-amino-acid chain: Beta-ketoacyl-[acyl-carrier-protein] synthase III (331 aa).

Active-site residues include Cys115 and His255. Residues 256-260 (QANFR) form an ACP-binding region. The active site involves Asn285.

It belongs to the thiolase-like superfamily. FabH family. Homodimer.

Its subcellular location is the cytoplasm. The enzyme catalyses malonyl-[ACP] + acetyl-CoA + H(+) = 3-oxobutanoyl-[ACP] + CO2 + CoA. It participates in lipid metabolism; fatty acid biosynthesis. In terms of biological role, catalyzes the condensation reaction of fatty acid synthesis by the addition to an acyl acceptor of two carbons from malonyl-ACP. Catalyzes the first condensation reaction which initiates fatty acid synthesis and may therefore play a role in governing the total rate of fatty acid production. Possesses both acetoacetyl-ACP synthase and acetyl transacylase activities. Its substrate specificity determines the biosynthesis of branched-chain and/or straight-chain of fatty acids. This Helicobacter pylori (strain Shi470) protein is Beta-ketoacyl-[acyl-carrier-protein] synthase III.